Here is a 106-residue protein sequence, read N- to C-terminus: Small ribosomal subunit protein uS10 (106 aa).

It belongs to the universal ribosomal protein uS10 family. As to quaternary structure, part of the 30S ribosomal subunit.

Its function is as follows. Involved in the binding of tRNA to the ribosomes. This Mesomycoplasma hyopneumoniae (strain 232) (Mycoplasma hyopneumoniae) protein is Small ribosomal subunit protein uS10.